A 776-amino-acid polypeptide reads, in one-letter code: Probable E3 ubiquitin-protein ligase HECTD2 (776 aa).

The disordered stretch occupies residues 1–46; it reads MSEAVRVPSPATPLVVAAAAPEERKGKESEREKLPPIVSAGAGATA. A compositionally biased stretch (low complexity) spans 7–20; it reads VPSPATPLVVAAAA. Ser9 carries the post-translational modification Phosphoserine. The segment covering 21 to 34 has biased composition (basic and acidic residues); that stretch reads PEERKGKESEREKL. An HECT domain is found at 437-776; sequence KRADLKKKLK…ISNSEGFGLE (340 aa). Cys744 functions as the Glycyl thioester intermediate in the catalytic mechanism.

It carries out the reaction S-ubiquitinyl-[E2 ubiquitin-conjugating enzyme]-L-cysteine + [acceptor protein]-L-lysine = [E2 ubiquitin-conjugating enzyme]-L-cysteine + N(6)-ubiquitinyl-[acceptor protein]-L-lysine.. Its pathway is protein modification; protein ubiquitination. E3 ubiquitin-protein ligase which accepts ubiquitin from an E2 ubiquitin-conjugating enzyme in the form of a thioester and then directly transfers the ubiquitin to targeted substrates. This is Probable E3 ubiquitin-protein ligase HECTD2 (HECTD2) from Pongo abelii (Sumatran orangutan).